The primary structure comprises 379 residues: Nitric oxide reductase FlRd-NAD(+) reductase (379 aa).

It belongs to the FAD-dependent oxidoreductase family. Requires FAD as cofactor.

It localises to the cytoplasm. It catalyses the reaction 2 reduced [nitric oxide reductase rubredoxin domain] + NAD(+) + H(+) = 2 oxidized [nitric oxide reductase rubredoxin domain] + NADH. The protein operates within nitrogen metabolism; nitric oxide reduction. Its function is as follows. One of at least two accessory proteins for anaerobic nitric oxide (NO) reductase. Reduces the rubredoxin moiety of NO reductase. The chain is Nitric oxide reductase FlRd-NAD(+) reductase from Pectobacterium atrosepticum (strain SCRI 1043 / ATCC BAA-672) (Erwinia carotovora subsp. atroseptica).